The primary structure comprises 71 residues: uncharacterized protein (71 aa).

Residues 5–22 traverse the membrane as a helical segment; sequence VVMCSGLFCSVFAGAFML.

The protein resides in the membrane. This is an uncharacterized protein from Bacillus subtilis (strain 168).